Reading from the N-terminus, the 477-residue chain is Glycogen synthase (477 aa).

Lys15 contributes to the ADP-alpha-D-glucose binding site.

This sequence belongs to the glycosyltransferase 1 family. Bacterial/plant glycogen synthase subfamily.

It carries out the reaction [(1-&gt;4)-alpha-D-glucosyl](n) + ADP-alpha-D-glucose = [(1-&gt;4)-alpha-D-glucosyl](n+1) + ADP + H(+). Its pathway is glycan biosynthesis; glycogen biosynthesis. In terms of biological role, synthesizes alpha-1,4-glucan chains using ADP-glucose. This is Glycogen synthase from Streptococcus pneumoniae (strain 70585).